A 425-amino-acid polypeptide reads, in one-letter code: Serine--tRNA ligase (425 aa).

Position 230-232 (230-232 (TAE)) interacts with L-serine. 261-263 (RQE) is a binding site for ATP. Glu-284 is a binding site for L-serine. Residue 348-351 (EISS) coordinates ATP. Ser-384 is a binding site for L-serine.

This sequence belongs to the class-II aminoacyl-tRNA synthetase family. Type-1 seryl-tRNA synthetase subfamily. In terms of assembly, homodimer. The tRNA molecule binds across the dimer.

It is found in the cytoplasm. The catalysed reaction is tRNA(Ser) + L-serine + ATP = L-seryl-tRNA(Ser) + AMP + diphosphate + H(+). It catalyses the reaction tRNA(Sec) + L-serine + ATP = L-seryl-tRNA(Sec) + AMP + diphosphate + H(+). The protein operates within aminoacyl-tRNA biosynthesis; selenocysteinyl-tRNA(Sec) biosynthesis; L-seryl-tRNA(Sec) from L-serine and tRNA(Sec): step 1/1. In terms of biological role, catalyzes the attachment of serine to tRNA(Ser). Is also able to aminoacylate tRNA(Sec) with serine, to form the misacylated tRNA L-seryl-tRNA(Sec), which will be further converted into selenocysteinyl-tRNA(Sec). The sequence is that of Serine--tRNA ligase from Caldanaerobacter subterraneus subsp. tengcongensis (strain DSM 15242 / JCM 11007 / NBRC 100824 / MB4) (Thermoanaerobacter tengcongensis).